Consider the following 725-residue polypeptide: Eukaryotic elongation factor 2 kinase (725 aa).

A compositionally biased stretch (basic and acidic residues) spans 1–12; it reads MADEDLIFRLEG. Residues 1-38 are disordered; it reads MADEDLIFRLEGVDGGQSPRAGHDGDSDGDSDDEEGYF. N-acetylalanine is present on A2. Phosphoserine is present on residues S18 and S27. Positions 27–36 are enriched in acidic residues; it reads SDGDSDDEEG. Phosphoserine; by autocatalysis occurs at positions 61 and 66. Phosphoserine is present on residues S70, S71, S72, and S74. S78 is subject to Phosphoserine; by autocatalysis and TRPM7. Positions 81-94 are calmodulin-binding; it reads FKEAWKHAIQKAKH. In terms of domain architecture, Alpha-type protein kinase spans 116–326; the sequence is RYNAVTGEWL…ICESMGLAPF (211 aa). S243 carries the phosphoserine modification. ATP is bound at residue 296–302; the sequence is GDGNLGV. T348 and T353 each carry phosphothreonine; by autocatalysis. Disordered regions lie at residues 352–405 and 423–477; these read GTEE…PHSQ and SRDH…SLGS. S359 carries the post-translational modification Phosphoserine; by MAPK13 and CDK1. Residues 363–377 show a composition bias toward low complexity; sequence RTLSGSRPPLLRPLS. A Phosphoserine; by autocatalysis, RPS6KA1 and RPS6KB1 modification is found at S366. Residues 386-404 are compositionally biased toward polar residues; that stretch reads SDVTFDSLPSSPSSATPHS. The residue at position 392 (S392) is a Phosphoserine. At S398 the chain carries Phosphoserine; by AMPK. Composition is skewed to basic and acidic residues over residues 423-436 and 445-469; these read SRDH…RESE and SEKR…RKYE. Phosphoserine is present on S435. S445 carries the post-translational modification Phosphoserine; by autocatalysis. The residue at position 470 (S470) is a Phosphoserine. A Phosphoserine; by autocatalysis modification is found at S474. The residue at position 477 (S477) is a Phosphoserine. S491 is subject to Phosphoserine; by autocatalysis. A Phosphoserine; by PKA modification is found at S500.

Belongs to the protein kinase superfamily. Alpha-type protein kinase family. In terms of assembly, monomer or homodimer. Interacts with Calmodulin/CALM1; this interaction is strictly required for phosphorylation activity. Post-translationally, autophosphorylated at multiple residues, Thr-348 being the major site. Phosphorylated by AMP-activated protein kinase AMPK at Ser-398 leading to EEF2K activation and protein synthesis inhibition. Phosphorylated by TRPM7 at Ser-78 resulting in improved protein stability, higher EE2F phosphorylated and subsequently reduced rate of protein synthesis. Phosphorylation by other kinases such as CDK1 and MAPK13 at Ser-359 or RPS6KA1 and RPS6KB1 at Ser-366 instead decrease EEF2K activity and promote protein synthesis.

It carries out the reaction [translation elongation factor 2] + ATP = [translation elongation factor 2]-phosphate + ADP + H(+). Undergoes calcium/calmodulin-dependent intramolecular autophosphorylation, and this results in it becoming partially calcium/calmodulin-independent. Functionally, threonine kinase that regulates protein synthesis by controlling the rate of peptide chain elongation. Upon activation by a variety of upstream kinases including AMPK or TRPM7, phosphorylates the elongation factor EEF2 at a single site, renders it unable to bind ribosomes and thus inactive. In turn, the rate of protein synthesis is reduced. The chain is Eukaryotic elongation factor 2 kinase (EEF2K) from Homo sapiens (Human).